Here is a 424-residue protein sequence, read N- to C-terminus: Putative chloroquine resistance transporter (424 aa).

Residues 1–56 (MTVIKKGKNKKKNLKNDDRYKELDSLITNGSEIGDNSGRSCIKRFFKIIGNEMKNN) lie on the Cytoplasmic side of the membrane. The chain crosses the membrane as a helical span at residues 57 to 77 (VYVYFLSILYLCVCVMNKVFA). Residues 78 to 88 (KRTLNKMGNYS) are Vacuolar-facing. The N-linked (GlcNAc...) asparagine glycan is linked to Asn86. The helical transmembrane segment at 89–109 (FVTSETHNIICIVVFQLLYFI) threads the bilayer. Residues 110 to 125 (YRKTSTSGYKNESQKN) lie on the Cytoplasmic side of the membrane. A helical transmembrane segment spans residues 126–146 (FGWQFFLISLLDASTVIISMI). Residues 147–156 (GLTRTTGNIQ) lie on the Vacuolar side of the membrane. A helical transmembrane segment spans residues 157-177 (SFIMQLIIPVNMYFCFMFLGY). Residues 178–180 (RYH) lie on the Cytoplasmic side of the membrane. The helical transmembrane segment at 181–201 (LFNYLGAFIILITIAVVETFL) threads the bilayer. The Vacuolar portion of the chain corresponds to 202–209 (SFETQSEN). A helical transmembrane segment spans residues 210–230 (SIIFNLIMISALIPLSFSNMT). The Cytoplasmic segment spans residues 231–248 (REVVFKKHKINILRLNAM). A helical membrane pass occupies residues 249–269 (VVLFQFFTSLLVLPVYNIPFL). Topologically, residues 270-317 (KEIYMPFSEMSTNINNGLRCLFYGQNTVVENCGVGMVKMCDNCEGAWK) are vacuolar. 2 disulfide bridges follow: Cys289/Cys312 and Cys301/Cys309. Residues 318-338 (TFITFSFFNICDNLLACYIID) form a helical membrane-spanning segment. The Cytoplasmic segment spans residues 339 to 346 (KFSTMTYT). A helical transmembrane segment spans residues 347-367 (IVSCIQGPAITIAYYFKFLAG). Over 368–377 (DAVRKPRILD) the chain is Vacuolar. A helical membrane pass occupies residues 378–398 (FLTLFGYLFGTIIYRIGNIIL). Over 399–424 (EKKKMVKSQNSNDSEAELTCIETSTA) the chain is Cytoplasmic.

The protein belongs to the CRT-like transporter family.

The protein localises to the vacuole membrane. Nutrient transporter. Involved in maintaining the osmotic homeostasis of the digestive vacuole. The sequence is that of Putative chloroquine resistance transporter from Plasmodium yoelii yoelii.